We begin with the raw amino-acid sequence, 451 residues long: Type 3 secretion system ATPase (451 aa).

ATP is bound at residue 184–189; it reads GGGKST.

This sequence belongs to the ATPase alpha/beta chains family. T3SS ATPase subfamily. As to quaternary structure, the core secretion machinery of the T3SS is composed of approximately 20 different proteins, including cytoplasmic components, a base, an export apparatus and a needle. This subunit is part of the cytosolic complex. Forms homohexamers.

It localises to the cytoplasm. The catalysed reaction is ATP + H2O + cellular proteinSide 1 = ADP + phosphate + cellular proteinSide 2.. ATPase component of the type III secretion system (T3SS), also called injectisome, which is used to inject bacterial effector proteins into eukaryotic host cells. Acts as a molecular motor to provide the energy that is required for the export of proteins. Required for type III secretion apparatus (T3SA) formation, proper protein secretion, host cell invasion and virulence. May play a critical role in T3SS substrate recognition, disassembly of the effector/chaperone complex and unfolding of the effector in an ATP-dependent manner prior to secretion. This Sinorhizobium fredii (strain NBRC 101917 / NGR234) protein is Type 3 secretion system ATPase.